Reading from the N-terminus, the 316-residue chain is Serpentine receptor class delta-45 (316 aa).

Helical transmembrane passes span 8–28, 42–62, 91–111, 128–148, 184–204, 234–254, and 266–286; these read VFYPMFFILVIPSLILLIFII, ILLVTCISQIVAVTTNCLIQI, YFLTQTAVVISNVLIFLTIYL, VTFFILSPIFIALGAQTSLIL, IIITFVITGTILILPAVGLLL, LQVFLPLICYIPVFGSFLVLA, and FFSVLVMLPMLFDPYIILYSV.

It belongs to the nematode receptor-like protein srd family.

The protein localises to the membrane. The chain is Serpentine receptor class delta-45 (srd-45) from Caenorhabditis elegans.